The sequence spans 101 residues: Small ribosomal subunit protein uS10 (101 aa).

This sequence belongs to the universal ribosomal protein uS10 family. Part of the 30S ribosomal subunit.

Functionally, involved in the binding of tRNA to the ribosomes. The protein is Small ribosomal subunit protein uS10 of Mycobacterium leprae (strain Br4923).